The primary structure comprises 211 residues: MFRVHCNKCFRHRKTDPAVPFHLTQCRHVICGPCLGQSSLEKNCPLCGQVLKAIQINRDMPTSVANYFADPLRFQQIYRKISKFQADQRASDNLGFYRQLQQLEQNKRQLEGFCKMEAQLNQKVVEEKKRIAELRTYIAYHENAQRMTRRRHSAGERFHTPEFKEAWNTSISTSDKSPSDMPSDSSRRSADLDTQSTRRRSFGSDTKGFRL.

The RING-type zinc-finger motif lies at 6–47; the sequence is CNKCFRHRKTDPAVPFHLTQCRHVICGPCLGQSSLEKNCPLC. A disordered region spans residues 149 to 211; that stretch reads RRRHSAGERF…FGSDTKGFRL (63 aa). Positions 153-165 are enriched in basic and acidic residues; it reads SAGERFHTPEFKE. Residues 172–184 show a composition bias toward low complexity; it reads STSDKSPSDMPSD.

In terms of assembly, may interact with itself, with nenya and vilya through its RING-type zinc finger. Expressed in nurse cell and pro-oocytes (at protein level).

The protein resides in the chromosome. Required for the formation of DNA double-strand breaks (DSBs) together with nenya and vilya during the meiotic recombination process. Plays a role in DSBs processing into crossovers. Plays a redundant role with nenya in chromosome segregation during female meiosis. The protein is RING finger protein narya of Drosophila melanogaster (Fruit fly).